A 594-amino-acid chain; its full sequence is 4-alpha-glucanotransferase DPE1, chloroplastic/amyloplastic (594 aa).

A chloroplast-targeting transit peptide spans 1-37; the sequence is MATLSLPLPHLTQAIPARARPRPRPLRGIPARLLSCR.

This sequence belongs to the disproportionating enzyme family.

The protein localises to the plastid. Its subcellular location is the chloroplast. It localises to the amyloplast. The catalysed reaction is Transfers a segment of a (1-&gt;4)-alpha-D-glucan to a new position in an acceptor, which may be glucose or a (1-&gt;4)-alpha-D-glucan.. Functionally, chloroplastic alpha-glucanotransferase involved in maltotriose metabolism. The protein is 4-alpha-glucanotransferase DPE1, chloroplastic/amyloplastic (DPE1) of Oryza sativa subsp. japonica (Rice).